A 507-amino-acid polypeptide reads, in one-letter code: Light-independent protochlorophyllide reductase subunit B (507 aa).

Asp-36 contributes to the [4Fe-4S] cluster binding site. The active-site Proton donor is Asp-293. Residue 428–429 (GM) participates in substrate binding.

This sequence belongs to the ChlB/BchB/BchZ family. Protochlorophyllide reductase is composed of three subunits; ChlL, ChlN and ChlB. Forms a heterotetramer of two ChlB and two ChlN subunits. [4Fe-4S] cluster is required as a cofactor.

It localises to the plastid. It is found in the chloroplast. It catalyses the reaction chlorophyllide a + oxidized 2[4Fe-4S]-[ferredoxin] + 2 ADP + 2 phosphate = protochlorophyllide a + reduced 2[4Fe-4S]-[ferredoxin] + 2 ATP + 2 H2O. The protein operates within porphyrin-containing compound metabolism; chlorophyll biosynthesis (light-independent). In terms of biological role, component of the dark-operative protochlorophyllide reductase (DPOR) that uses Mg-ATP and reduced ferredoxin to reduce ring D of protochlorophyllide (Pchlide) to form chlorophyllide a (Chlide). This reaction is light-independent. The NB-protein (ChlN-ChlB) is the catalytic component of the complex. This Porphyra purpurea (Red seaweed) protein is Light-independent protochlorophyllide reductase subunit B.